A 257-amino-acid polypeptide reads, in one-letter code: NAD-dependent protein deacetylase (257 aa).

The 250-residue stretch at 3-252 folds into the Deacetylase sirtuin-type domain; it reads NGECLEGGRK…DLVLNEVKGI (250 aa). NAD(+) is bound by residues alanine 29, threonine 33, phenylalanine 40, arginine 41, glutamine 105, isoleucine 107, aspartate 108, and histidine 123. Phenylalanine 40 lines the nicotinamide pocket. Nicotinamide contacts are provided by isoleucine 107 and aspartate 108. The active-site Proton acceptor is histidine 123. 4 residues coordinate Zn(2+): cysteine 131, cysteine 134, cysteine 156, and cysteine 159. The NAD(+) site is built by serine 195, serine 196, and asparagine 220.

This sequence belongs to the sirtuin family. Class U subfamily. Zn(2+) serves as cofactor.

Its subcellular location is the cytoplasm. The enzyme catalyses N(6)-acetyl-L-lysyl-[protein] + NAD(+) + H2O = 2''-O-acetyl-ADP-D-ribose + nicotinamide + L-lysyl-[protein]. NAD-dependent protein deacetylase which modulates the activities of several enzymes which are inactive in their acetylated form. Deacetylates the N-terminal lysine residue of Alba, the major archaeal chromatin protein and that, in turn, increases Alba's DNA binding affinity, thereby repressing transcription. This Caldivirga maquilingensis (strain ATCC 700844 / DSM 13496 / JCM 10307 / IC-167) protein is NAD-dependent protein deacetylase.